We begin with the raw amino-acid sequence, 623 residues long: Chaperone protein dnaK (623 aa).

Residues 598-623 form a disordered region; it reads TPDAGAEGGAAPSQDDAIETDFSTEK.

The protein belongs to the heat shock protein 70 family.

It localises to the plastid. The protein resides in the chloroplast. Acts as a chaperone. This chain is Chaperone protein dnaK, found in Emiliania huxleyi (Coccolithophore).